Reading from the N-terminus, the 111-residue chain is MKDPYDVVKRHYVTEKAKMLEGLSLGGGEGKKKGSFCKDPKYTFVVAGDATKPMIAEAIEAIYSNKGVKVKKVNTVCVKPQPTRIFRGKRKGRTAGFKKAIVTFVDGHSIG.

Belongs to the universal ribosomal protein uL23 family. In terms of assembly, part of the 50S ribosomal subunit. Contacts protein L29, and trigger factor when it is bound to the ribosome.

In terms of biological role, one of the early assembly proteins it binds 23S rRNA. One of the proteins that surrounds the polypeptide exit tunnel on the outside of the ribosome. Forms the main docking site for trigger factor binding to the ribosome. The chain is Large ribosomal subunit protein uL23 from Chlamydia muridarum (strain MoPn / Nigg).